We begin with the raw amino-acid sequence, 252 residues long: Small ribosomal subunit protein uS3 (252 aa).

Residues 39-110 (IRKALMKELK…EVKINVVEIK (72 aa)) form the KH type-2 domain. The disordered stretch occupies residues 218–252 (TSDEKPKFEKRDFNRSNNNRRDQAPKSHPVAKEAK). Over residues 219–252 (SDEKPKFEKRDFNRSNNNRRDQAPKSHPVAKEAK) the composition is skewed to basic and acidic residues.

The protein belongs to the universal ribosomal protein uS3 family. In terms of assembly, part of the 30S ribosomal subunit. Forms a tight complex with proteins S10 and S14.

Its function is as follows. Binds the lower part of the 30S subunit head. Binds mRNA in the 70S ribosome, positioning it for translation. This chain is Small ribosomal subunit protein uS3, found in Spiroplasma citri.